Here is a 338-residue protein sequence, read N- to C-terminus: uncharacterized protein (338 aa).

A helical transmembrane segment spans residues isoleucine 20–leucine 40.

It localises to the membrane. This is an uncharacterized protein from Schizosaccharomyces pombe (strain 972 / ATCC 24843) (Fission yeast).